A 66-amino-acid polypeptide reads, in one-letter code: Large ribosomal subunit protein bL28 (66 aa).

This sequence belongs to the bacterial ribosomal protein bL28 family.

This is Large ribosomal subunit protein bL28 from Oenococcus oeni (strain ATCC BAA-331 / PSU-1).